The sequence spans 237 residues: Bax inhibitor 1 (237 aa).

Topologically, residues 1-29 (MNIFDRKINFDALLKFSHITPSTQQHLKK) are cytoplasmic. Lys-7 is covalently cross-linked (Glycyl lysine isopeptide (Lys-Gly) (interchain with G-Cter in ubiquitin)). Residues 30 to 50 (VYASFALCMFVAAAGAYVHMV) traverse the membrane as a helical segment. Residues 51 to 52 (TH) lie on the Lumenal side of the membrane. Residues 53–73 (FIQAGLLSALGSLILMIWLMA) form a helical membrane-spanning segment. Residues 74–86 (TPHSHETEQKRLG) are Cytoplasmic-facing. A helical membrane pass occupies residues 87 to 107 (LLAGFAFLTGVGLGPALEFCI). Topologically, residues 108-112 (AVNPS) are lumenal. A helical transmembrane segment spans residues 113–133 (ILPTAFMGTAMIFTCFTLSAL). The Cytoplasmic portion of the chain corresponds to 134–139 (YARRRS). Residues 140 to 160 (YLFLGGILMSALSLLLLSSLG) traverse the membrane as a helical segment. Residues 161–166 (NVFFGS) lie on the Lumenal side of the membrane. The chain crosses the membrane as a helical span at residues 167 to 187 (IWLFQANLYVGLVVMCGFVLF). Residues 188 to 206 (DTQLIIEKAEHGDQDYIWH) are Cytoplasmic-facing. Positions 207-227 (CIDLFLDFITVFRKLMMILAM) form an intramembrane region, helical. Topologically, residues 228 to 237 (NEKDKKKEKK) are cytoplasmic.

It belongs to the BI1 family. Interacts with BCL2 and BCL2L1. Interacts with ERN1. Post-translationally, ubiquitinated by BFAR, leading to proteasomal degradation. As to expression, highly abundant in testis.

It is found in the endoplasmic reticulum membrane. Endoplasmic reticulum (ER)-resident protein that confers cellular protection as an anti-apoptotic protein by limiting multiple stress-inducing pathways surrounding the endoplasmic reticulum and mitochondria. Inhibits the activities of the key sensor for the endoplasmic reticulum unfolded protein response IRE1alpha/ERN1 both directly and by blocking BAX/BAK binding. Modulates ER calcium homeostasis by acting as a calcium-leak channel. Negatively regulates autophagy and autophagosome formation, especially during periods of nutrient deprivation, and reduces cell survival during starvation. This Homo sapiens (Human) protein is Bax inhibitor 1 (TMBIM6).